A 171-amino-acid polypeptide reads, in one-letter code: 3-hydroxydecanoyl-[acyl-carrier-protein] dehydratase (171 aa).

His70 is an active-site residue.

Belongs to the thioester dehydratase family. FabA subfamily. As to quaternary structure, homodimer.

It localises to the cytoplasm. It catalyses the reaction a (3R)-hydroxyacyl-[ACP] = a (2E)-enoyl-[ACP] + H2O. It carries out the reaction (3R)-hydroxydecanoyl-[ACP] = (2E)-decenoyl-[ACP] + H2O. The enzyme catalyses (2E)-decenoyl-[ACP] = (3Z)-decenoyl-[ACP]. The protein operates within lipid metabolism; fatty acid biosynthesis. Functionally, necessary for the introduction of cis unsaturation into fatty acids. Catalyzes the dehydration of (3R)-3-hydroxydecanoyl-ACP to E-(2)-decenoyl-ACP and then its isomerization to Z-(3)-decenoyl-ACP. Can catalyze the dehydratase reaction for beta-hydroxyacyl-ACPs with saturated chain lengths up to 16:0, being most active on intermediate chain length. In Pseudomonas putida (strain ATCC 700007 / DSM 6899 / JCM 31910 / BCRC 17059 / LMG 24140 / F1), this protein is 3-hydroxydecanoyl-[acyl-carrier-protein] dehydratase.